The sequence spans 395 residues: MQAELQTALFQAFDTLNLQRVKTFSVPPVTLCGLGALGACGQEAQARGVSHLFVMVDSFLHQAGMTAPLARSLAMKGVAMTVWPCPPGEPCITDVCAAVAQLREAACDGVVAFGGGSVLDAAKAVALLVTNPDQTLSAMTEHSTLRPRLPLIAVPTTAGTGSETTNVTVIIDAVSGRKQVLAHASLMPDVAILDAAVTEGVPPNVTAMTGIDALTHAIEAYSALNATPFTDSLAIGAIAMIGKSLPKAVGYGHDLAARENMLLASCMAGMAFSSAGLGLCHAMAHQPGAALHIPHGQANAMLLPTVMGFNRMVCRERFSQIGRALTNKKSDDRDAIAAVCELIAEVGQSKRLADAGAKPEHYSAWAQAALEDICLRSNPRTATQAQIIDLYAAAG.

NAD(+) contacts are provided by residues Asp-57, 116–120 (GSVLD), 156–160 (TTAGT), Lys-178, and 197–201 (VTEGV). Residues Asp-212, His-216, His-281, and His-295 each coordinate Fe cation. 2 residues coordinate NAD(+): His-295 and Asp-354.

This sequence belongs to the iron-containing alcohol dehydrogenase family. Fe cation is required as a cofactor.

The protein localises to the bacterial microcompartment. It catalyses the reaction ethanol + NAD(+) = acetaldehyde + NADH + H(+). The protein operates within amine and polyamine degradation; ethanolamine degradation. Functionally, probably acts on the acetaldehyde produced by the degradation of ethanolamine, producing ethanol. In terms of biological role, expression of the eut operon allows this bacteria to use ethanolamine (EA) as a carbon, nitrogen and energy source. It relies on cobalamin (vitamin B12) both as a cofactor for the ethanolamine ammonia-lyase (EAL) activity and to induce the operon. EA enhances bacterial survival in macrophages in a concentration-dependent manner, suggesting it is an important nutrient during infection. The protein is Probable alcohol dehydrogenase EutG of Salmonella typhimurium (strain LT2 / SGSC1412 / ATCC 700720).